Here is a 329-residue protein sequence, read N- to C-terminus: Replication factor C small subunit 1 (329 aa).

44–51 (GPPGTGKT) is a binding site for ATP.

This sequence belongs to the activator 1 small subunits family. RfcS subfamily. As to quaternary structure, heteromultimer composed of small subunits (RfcS) and large subunits (RfcL).

In terms of biological role, part of the RFC clamp loader complex which loads the PCNA sliding clamp onto DNA. This Pyrobaculum arsenaticum (strain DSM 13514 / JCM 11321 / PZ6) protein is Replication factor C small subunit 1.